Consider the following 503-residue polypeptide: UDP-N-acetylmuramoyl-L-alanyl-D-glutamate--2,6-diaminopimelate ligase (503 aa).

Serine 32 is a binding site for UDP-N-acetyl-alpha-D-muramoyl-L-alanyl-D-glutamate. Residue 117 to 123 coordinates ATP; it reads GTNGKTT. Residues 159 to 160, serine 186, glutamine 192, and arginine 194 each bind UDP-N-acetyl-alpha-D-muramoyl-L-alanyl-D-glutamate; that span reads TT. Lysine 226 is modified (N6-carboxylysine). Meso-2,6-diaminopimelate-binding positions include arginine 396, 420 to 423, glycine 471, and glutamate 475; that span reads DNPR. The Meso-diaminopimelate recognition motif motif lies at 420–423; the sequence is DNPR.

The protein belongs to the MurCDEF family. MurE subfamily. Mg(2+) is required as a cofactor. In terms of processing, carboxylation is probably crucial for Mg(2+) binding and, consequently, for the gamma-phosphate positioning of ATP.

It localises to the cytoplasm. It carries out the reaction UDP-N-acetyl-alpha-D-muramoyl-L-alanyl-D-glutamate + meso-2,6-diaminopimelate + ATP = UDP-N-acetyl-alpha-D-muramoyl-L-alanyl-gamma-D-glutamyl-meso-2,6-diaminopimelate + ADP + phosphate + H(+). It participates in cell wall biogenesis; peptidoglycan biosynthesis. Catalyzes the addition of meso-diaminopimelic acid to the nucleotide precursor UDP-N-acetylmuramoyl-L-alanyl-D-glutamate (UMAG) in the biosynthesis of bacterial cell-wall peptidoglycan. This Prochlorococcus marinus (strain SARG / CCMP1375 / SS120) protein is UDP-N-acetylmuramoyl-L-alanyl-D-glutamate--2,6-diaminopimelate ligase.